We begin with the raw amino-acid sequence, 132 residues long: Small ribosomal subunit protein uS11 (132 aa).

It belongs to the universal ribosomal protein uS11 family. Part of the 30S ribosomal subunit.

Functionally, located on the platform of the 30S subunit. The chain is Small ribosomal subunit protein uS11 from Caldivirga maquilingensis (strain ATCC 700844 / DSM 13496 / JCM 10307 / IC-167).